The sequence spans 581 residues: Neither inactivation nor afterpotential protein G (581 aa).

A signal peptide spans 1-26 (MGMKFQKILVLAGIVIGFLSIIVVLA). 48 to 77 (DYVIVGGGTGGSTLTSLLAKNSNGSVLLIE) is a binding site for FAD. Asparagine 70, asparagine 156, asparagine 404, and asparagine 464 each carry an N-linked (GlcNAc...) asparagine glycan. Histidine 516 serves as the catalytic Proton acceptor.

This sequence belongs to the GMC oxidoreductase family. FAD serves as cofactor.

It localises to the secreted. Oxidoreductase involved in biosynthesis of 3-hydroxyretinal, a chromophore for rhodopsin Rh1. Not responsible for the initial hydroxylation of the retinal ring but rather acts in a subsequent step in chromophore production. May catalyze the conversion of (3R)-3-hydroxyretinol to the 3S enantiomer. The protein is Neither inactivation nor afterpotential protein G (ninaG) of Drosophila melanogaster (Fruit fly).